Here is a 463-residue protein sequence, read N- to C-terminus: Fumarate hydratase class II (463 aa).

Substrate contacts are provided by residues 95–97 (SGT), 126–129 (HPND), 136–138 (SSN), and T184. The active-site Proton donor/acceptor is the H185. S315 is an active-site residue. Residues S316 and 321-323 (KIN) each bind substrate.

This sequence belongs to the class-II fumarase/aspartase family. Fumarase subfamily. As to quaternary structure, homotetramer.

The protein localises to the cytoplasm. The enzyme catalyses (S)-malate = fumarate + H2O. Its pathway is carbohydrate metabolism; tricarboxylic acid cycle; (S)-malate from fumarate: step 1/1. Involved in the TCA cycle. Catalyzes the stereospecific interconversion of fumarate to L-malate. The polypeptide is Fumarate hydratase class II (Chlamydia muridarum (strain MoPn / Nigg)).